Reading from the N-terminus, the 433-residue chain is Homogentisate 1,2-dioxygenase (433 aa).

The Proton acceptor role is filled by H288. Residues H331 and E337 each contribute to the Fe cation site. Residues Y346 and H367 each contribute to the homogentisate site. H367 serves as a coordination point for Fe cation.

The protein belongs to the homogentisate dioxygenase family. Hexamer; dimer of trimers. The cofactor is Fe cation.

It catalyses the reaction homogentisate + O2 = 4-maleylacetoacetate + H(+). It participates in amino-acid degradation; L-phenylalanine degradation; acetoacetate and fumarate from L-phenylalanine: step 4/6. Its function is as follows. Involved in the catabolism of homogentisate (2,5-dihydroxyphenylacetate or 2,5-OH-PhAc), a central intermediate in the degradation of phenylalanine and tyrosine. Catalyzes the oxidative ring cleavage of the aromatic ring of homogentisate to yield maleylacetoacetate. This chain is Homogentisate 1,2-dioxygenase, found in Pseudomonas putida (strain ATCC 700007 / DSM 6899 / JCM 31910 / BCRC 17059 / LMG 24140 / F1).